Reading from the N-terminus, the 162-residue chain is Transcriptional regulator MraZ (162 aa).

SpoVT-AbrB domains follow at residues 11 to 62 and 98 to 141; these read EHPS…GLSV and AVEC…SRDT.

This sequence belongs to the MraZ family. As to quaternary structure, forms oligomers.

The protein localises to the cytoplasm. Its subcellular location is the nucleoid. The protein is Transcriptional regulator MraZ of Pelobacter propionicus (strain DSM 2379 / NBRC 103807 / OttBd1).